The sequence spans 156 residues: 6,7-dimethyl-8-ribityllumazine synthase (156 aa).

5-amino-6-(D-ribitylamino)uracil contacts are provided by residues phenylalanine 22, alanine 57–glutamate 59, and cysteine 81–isoleucine 83. Glycine 86 to threonine 87 is a (2S)-2-hydroxy-3-oxobutyl phosphate binding site. The Proton donor role is filled by histidine 89. Residue phenylalanine 114 coordinates 5-amino-6-(D-ribitylamino)uracil. Arginine 128 is a (2S)-2-hydroxy-3-oxobutyl phosphate binding site.

Belongs to the DMRL synthase family. Forms an icosahedral capsid composed of 60 subunits, arranged as a dodecamer of pentamers.

The enzyme catalyses (2S)-2-hydroxy-3-oxobutyl phosphate + 5-amino-6-(D-ribitylamino)uracil = 6,7-dimethyl-8-(1-D-ribityl)lumazine + phosphate + 2 H2O + H(+). Its pathway is cofactor biosynthesis; riboflavin biosynthesis; riboflavin from 2-hydroxy-3-oxobutyl phosphate and 5-amino-6-(D-ribitylamino)uracil: step 1/2. Functionally, catalyzes the formation of 6,7-dimethyl-8-ribityllumazine by condensation of 5-amino-6-(D-ribitylamino)uracil with 3,4-dihydroxy-2-butanone 4-phosphate. This is the penultimate step in the biosynthesis of riboflavin. The sequence is that of 6,7-dimethyl-8-ribityllumazine synthase from Tolumonas auensis (strain DSM 9187 / NBRC 110442 / TA 4).